A 170-amino-acid polypeptide reads, in one-letter code: Acireductone dioxygenase (170 aa).

Fe(2+) is bound by residues histidine 99, histidine 101, glutamate 105, and histidine 144. Histidine 99, histidine 101, glutamate 105, and histidine 144 together coordinate Ni(2+).

It belongs to the acireductone dioxygenase (ARD) family. As to quaternary structure, monomer. Requires Fe(2+) as cofactor. Ni(2+) is required as a cofactor.

It catalyses the reaction 1,2-dihydroxy-5-(methylsulfanyl)pent-1-en-3-one + O2 = 3-(methylsulfanyl)propanoate + CO + formate + 2 H(+). The enzyme catalyses 1,2-dihydroxy-5-(methylsulfanyl)pent-1-en-3-one + O2 = 4-methylsulfanyl-2-oxobutanoate + formate + 2 H(+). It functions in the pathway amino-acid biosynthesis; L-methionine biosynthesis via salvage pathway; L-methionine from S-methyl-5-thio-alpha-D-ribose 1-phosphate: step 5/6. In terms of biological role, catalyzes 2 different reactions between oxygen and the acireductone 1,2-dihydroxy-3-keto-5-methylthiopentene (DHK-MTPene) depending upon the metal bound in the active site. Fe-containing acireductone dioxygenase (Fe-ARD) produces formate and 2-keto-4-methylthiobutyrate (KMTB), the alpha-ketoacid precursor of methionine in the methionine recycle pathway. Ni-containing acireductone dioxygenase (Ni-ARD) produces methylthiopropionate, carbon monoxide and formate, and does not lie on the methionine recycle pathway. The protein is Acireductone dioxygenase of Bacillus cereus (strain ATCC 10987 / NRS 248).